The chain runs to 404 residues: MELRVSNTSCENGSLLHLYCSSQEVLCQIVNDLSPEVPSNATFHSWQERIRQNYGFYIGLGLAFLSSFLIGSSVILKKKGLLRLVATGATRAVDGGFGYLKDAMWWAGFLTMAAGEVANFGAYAFAPATVVTPLGALSVLISAILSSYFLRESLNLLGKLGCVICVAGSTVMVIHAPEEEKVTTIMEMASKMKDTGFIVFAVLLLVSCLILIFVIAPRYGQRNILIYIIICSVIGAFSVAAVKGLGITIKNFFQGLPVVRHPLPYILSLILALSLSTQVNFLNRALDIFNTSLVFPIYYVFFTTVVVTSSIILFKEWYSMSAVDIAGTLSGFVTIILGVFMLHAFKDLDISCASLPHMHKNPPPSPAPEPTVIRLEDKNVLVDNIELASTSSPEEKPKVFIIHS.

Residues 1–55 (MELRVSNTSCENGSLLHLYCSSQEVLCQIVNDLSPEVPSNATFHSWQERIRQNYG) lie on the Extracellular side of the membrane. N-linked (GlcNAc...) asparagine glycans are attached at residues Asn-7, Asn-12, and Asn-40. Residues 56-76 (FYIGLGLAFLSSFLIGSSVIL) form a helical membrane-spanning segment. Residues 77–102 (KKKGLLRLVATGATRAVDGGFGYLKD) are Cytoplasmic-facing. Residues 103 to 123 (AMWWAGFLTMAAGEVANFGAY) traverse the membrane as a helical segment. Ala-124 is a topological domain (extracellular). A helical transmembrane segment spans residues 125 to 145 (FAPATVVTPLGALSVLISAIL). Residues 146 to 153 (SSYFLRES) are Cytoplasmic-facing. The helical transmembrane segment at 154–174 (LNLLGKLGCVICVAGSTVMVI) threads the bilayer. Over 175–195 (HAPEEEKVTTIMEMASKMKDT) the chain is Extracellular. Residues 196 to 216 (GFIVFAVLLLVSCLILIFVIA) traverse the membrane as a helical segment. The Cytoplasmic segment spans residues 217–223 (PRYGQRN). The helical transmembrane segment at 224 to 244 (ILIYIIICSVIGAFSVAAVKG) threads the bilayer. The Extracellular portion of the chain corresponds to 245 to 261 (LGITIKNFFQGLPVVRH). A helical membrane pass occupies residues 262–282 (PLPYILSLILALSLSTQVNFL). Residues 283–293 (NRALDIFNTSL) are Cytoplasmic-facing. The chain crosses the membrane as a helical span at residues 294–314 (VFPIYYVFFTTVVVTSSIILF). Topologically, residues 315-324 (KEWYSMSAVD) are extracellular. A helical membrane pass occupies residues 325-345 (IAGTLSGFVTIILGVFMLHAF). Topologically, residues 346 to 404 (KDLDISCASLPHMHKNPPPSPAPEPTVIRLEDKNVLVDNIELASTSSPEEKPKVFIIHS) are cytoplasmic.

It belongs to the NIPA family. Highly expressed in brain, lung, stomach, keratinocytes and leukocytes, and in all other tissues tested except liver, thyroid and fetal brain.

It is found in the cell membrane. It catalyses the reaction Mg(2+)(in) = Mg(2+)(out). In terms of biological role, acts as a Mg(2+) transporter. Can also transport other divalent cations such as Ba(2+), Sr(2+) and Fe(2+) but to a much less extent than Mg(2+). May be a receptor for ligands (trioxilins A3 and B3) from the hepoxilin pathway. The chain is Magnesium transporter NIPA4 (NIPAL4) from Homo sapiens (Human).